A 309-amino-acid chain; its full sequence is MNFHTARISQVGVISRALLSSVSRRWIHVTPISLNNSGGSLFGSITENKPKEGKNRGDEDAGSFSNRLAIASDSSGEAPEVNRDSITIENDKLLQQHIISLQQPEQLASQSLLSPLKREIYEANCKINGGFYKKDTIVKLPNSSERYKLKLTKREIEVLEPSVYAQSYRIKSSMKKATLLLRLLGGLDVMKAISQCHFSNKKIAREVAELLQKGVKDGQKLGLKPEDLYISQIWTGSDGFWRKRVEFKARTRIGIISHPYIHVRCILRTKSVTKRRLAYEAHLKEQKRAPWVQLGDKPIRGVTGGVYKW.

The N-terminal 25 residues, methionine 1–arginine 25, are a transit peptide targeting the mitochondrion. The tract at residues serine 40–serine 63 is disordered. The span at asparagine 48–glutamate 59 shows a compositional bias: basic and acidic residues.

This sequence belongs to the universal ribosomal protein uL22 family. Component of the mitochondrial large ribosomal subunit (mt-LSU). Mature yeast 74S mitochondrial ribosomes consist of a small (37S) and a large (54S) subunit. The 37S small subunit contains a 15S ribosomal RNA (15S mt-rRNA) and 34 different proteins. The 54S large subunit contains a 21S rRNA (21S mt-rRNA) and 46 different proteins. uL22m forms the wall of the exit tunnel.

Its subcellular location is the mitochondrion. Functionally, component of the mitochondrial ribosome (mitoribosome), a dedicated translation machinery responsible for the synthesis of mitochondrial genome-encoded proteins, including at least some of the essential transmembrane subunits of the mitochondrial respiratory chain. The mitoribosomes are attached to the mitochondrial inner membrane and translation products are cotranslationally integrated into the membrane. In Saccharomyces cerevisiae (strain ATCC 204508 / S288c) (Baker's yeast), this protein is Large ribosomal subunit protein uL22m (MRPL22).